Here is a 182-residue protein sequence, read N- to C-terminus: Troponin I, fast skeletal muscle (182 aa).

Gly2 is subject to N-acetylglycine. Residues 2 to 48 form an involved in binding TNC region; that stretch reads GDEEKRNRAITARRQHLKSVMLQIAATELEKEESRRESEKENYLSEH. Thr12 carries the post-translational modification Phosphothreonine. Residues 29 to 45 are compositionally biased toward basic and acidic residues; it reads ELEKEESRRESEKENYL. A disordered region spans residues 29–53; that stretch reads ELEKEESRRESEKENYLSEHCPPLH. The tract at residues 97–117 is involved in binding TNC and actin; the sequence is NQKLFDLRGKFKRPPLRRVRM. Ser118 carries the phosphoserine modification.

Belongs to the troponin I family. In terms of assembly, binds to actin and tropomyosin.

Troponin I is the inhibitory subunit of troponin, the thin filament regulatory complex which confers calcium-sensitivity to striated muscle actomyosin ATPase activity. This chain is Troponin I, fast skeletal muscle (Tnni2), found in Mus musculus (Mouse).